A 375-amino-acid polypeptide reads, in one-letter code: Alcohol dehydrogenase 1A (375 aa).

Position 2 is an N-acetylserine (Ser-2). Ser-23 bears the Phosphoserine mark. Zn(2+) is bound at residue Cys-47. 48 to 52 (GTDDH) is a binding site for NAD(+). 6 residues coordinate Zn(2+): His-68, Cys-98, Cys-101, Cys-104, Cys-112, and Cys-175. NAD(+)-binding positions include 200-205 (GLGGVG), Asp-224, Lys-229, Ile-270, 293-295 (VGV), 318-320 (AVL), and Arg-370.

It belongs to the zinc-containing alcohol dehydrogenase family. Dimer of identical or heterodimer of closely related subunits alpha, beta, or gamma that are encoded by genes ADH1A, ADH1B, and ADH1C, respectively. The cofactor is Zn(2+).

Its subcellular location is the cytoplasm. It catalyses the reaction a primary alcohol + NAD(+) = an aldehyde + NADH + H(+). The catalysed reaction is a secondary alcohol + NAD(+) = a ketone + NADH + H(+). The enzyme catalyses butan-1-ol + NAD(+) = butanal + NADH + H(+). It carries out the reaction 1-propanol + NAD(+) = propanal + NADH + H(+). In terms of biological role, alcohol dehydrogenase. Oxidizes primary as well as secondary alcohols. Ethanol is a very poor substrate. The polypeptide is Alcohol dehydrogenase 1A (ADH1A) (Pongo abelii (Sumatran orangutan)).